We begin with the raw amino-acid sequence, 300 residues long: Protein p34 (300 aa).

Transmembrane regions (helical) follow at residues Tyr-14–Thr-34, Ile-39–Ala-59, Ser-87–Ile-107, Ile-119–Ile-139, and Leu-170–Phe-190.

Belongs to the cation diffusion facilitator (CDF) transporter (TC 2.A.4) family.

It is found in the cell membrane. This chain is Protein p34 (p34), found in Rickettsia prowazekii (strain Madrid E).